An 820-amino-acid chain; its full sequence is Serine/threonine-protein phosphatase 4 regulatory subunit 3B (820 aa).

The 100-residue stretch at 1-100 (MSDTRRRVKV…DEIWEKICQV (100 aa)) folds into the WH1 domain. Phosphoserine occurs at positions 117 and 663. The segment at 687-820 (EDDDEEGKAV…SPRKRPRLGS (134 aa)) is disordered. Positions 701–732 (EKSKTEDDFPDSYEKFMETKKAKESEDKENLP) are enriched in basic and acidic residues. Over residues 744–789 (FSHSPSATNGTNSTNSKSVVSQTTPASSNVASSKTTSLATSVTATK) the composition is skewed to polar residues. Positions 798–809 (YPDDEEEDEEEE) are enriched in acidic residues. Ser811 carries the post-translational modification Phosphoserine.

The protein belongs to the SMEK family. As to quaternary structure, serine/threonine-protein phosphatase 4 (PP4) occurs in different assemblies of the catalytic and one or more regulatory subunits. Component of the PP4 complex PPP4C-PPP4R2-PPP4R3B.

It is found in the cytoplasm. It localises to the cytoskeleton. The protein localises to the microtubule organizing center. The protein resides in the centrosome. Its subcellular location is the nucleus. Regulatory subunit of serine/threonine-protein phosphatase 4 (PP4). May regulate the activity of PPP4C at centrosomal microtubule organizing centers. This chain is Serine/threonine-protein phosphatase 4 regulatory subunit 3B, found in Mus musculus (Mouse).